The primary structure comprises 244 residues: Type III pantothenate kinase (244 aa).

12-19 (VVGNTHVR) contacts ATP. Residues Tyr79 and 83–86 (GLDR) contribute to the substrate site. The active-site Proton acceptor is Asp85. Asp105 lines the K(+) pocket. Residue Thr108 coordinates ATP. Position 163 (Thr163) interacts with substrate.

This sequence belongs to the type III pantothenate kinase family. Homodimer. NH4(+) serves as cofactor. K(+) is required as a cofactor.

Its subcellular location is the cytoplasm. It carries out the reaction (R)-pantothenate + ATP = (R)-4'-phosphopantothenate + ADP + H(+). It participates in cofactor biosynthesis; coenzyme A biosynthesis; CoA from (R)-pantothenate: step 1/5. Functionally, catalyzes the phosphorylation of pantothenate (Pan), the first step in CoA biosynthesis. This chain is Type III pantothenate kinase, found in Synechococcus sp. (strain JA-3-3Ab) (Cyanobacteria bacterium Yellowstone A-Prime).